A 231-amino-acid chain; its full sequence is MKAITLLSSGLDSVAALAIAAESLEIEMAITFDYGQRAGQREMEYSEKVCEHFGIEQRIIKLDWLGEITHTSLVNRDEEVPSLSFEDIDENSPSMITEYSAKAVWVPNRNGVMLNIAGSFAESRGCDYIVVGFNGEEAGTFPDNSRDYIQAVDNAFSYSTQNGVKVLAPLAEMGKTEIVKKALEAEAPLEYSWSCYHGGEIPCGKCESCVRRARAFKNIGIKDPLLERLGI.

Residue 7–17 coordinates ATP; that stretch reads LSSGLDSVAAL. Residues cysteine 195, cysteine 203, cysteine 206, and cysteine 209 each contribute to the Zn(2+) site.

This sequence belongs to the QueC family. Zn(2+) serves as cofactor.

The enzyme catalyses 7-carboxy-7-deazaguanine + NH4(+) + ATP = 7-cyano-7-deazaguanine + ADP + phosphate + H2O + H(+). Its pathway is purine metabolism; 7-cyano-7-deazaguanine biosynthesis. Catalyzes the ATP-dependent conversion of 7-carboxy-7-deazaguanine (CDG) to 7-cyano-7-deazaguanine (preQ(0)). This is 7-cyano-7-deazaguanine synthase from Methanosarcina mazei (strain ATCC BAA-159 / DSM 3647 / Goe1 / Go1 / JCM 11833 / OCM 88) (Methanosarcina frisia).